The primary structure comprises 188 residues: Large ribosomal subunit protein eL18 (188 aa).

Residues 147–188 (EANKHFGPAPGVPHSHTKAHVRSKGRQFERARGRRTSKGYKK) form a disordered region. Basic residues-rich tracts occupy residues 161 to 171 (SHTKAHVRSKG) and 178 to 188 (RGRRTSKGYKK).

Belongs to the eukaryotic ribosomal protein eL18 family.

Its subcellular location is the cytoplasm. The sequence is that of Large ribosomal subunit protein eL18 (RpL18) from Diaphorina citri (Asian citrus psyllid).